The primary structure comprises 184 residues: ATP synthase subunit delta (184 aa).

Belongs to the ATPase delta chain family. F-type ATPases have 2 components, F(1) - the catalytic core - and F(0) - the membrane proton channel. F(1) has five subunits: alpha(3), beta(3), gamma(1), delta(1), epsilon(1). F(0) has three main subunits: a(1), b(2) and c(10-14). The alpha and beta chains form an alternating ring which encloses part of the gamma chain. F(1) is attached to F(0) by a central stalk formed by the gamma and epsilon chains, while a peripheral stalk is formed by the delta and b chains.

It is found in the cell inner membrane. Its function is as follows. F(1)F(0) ATP synthase produces ATP from ADP in the presence of a proton or sodium gradient. F-type ATPases consist of two structural domains, F(1) containing the extramembraneous catalytic core and F(0) containing the membrane proton channel, linked together by a central stalk and a peripheral stalk. During catalysis, ATP synthesis in the catalytic domain of F(1) is coupled via a rotary mechanism of the central stalk subunits to proton translocation. In terms of biological role, this protein is part of the stalk that links CF(0) to CF(1). It either transmits conformational changes from CF(0) to CF(1) or is implicated in proton conduction. This chain is ATP synthase subunit delta, found in Caulobacter vibrioides (strain NA1000 / CB15N) (Caulobacter crescentus).